A 92-amino-acid chain; its full sequence is Large ribosomal subunit protein bL27 (92 aa).

Residues 1–20 (MAHKKAGGSTRNGRDSNPKY) are disordered.

The protein belongs to the bacterial ribosomal protein bL27 family.

The protein is Large ribosomal subunit protein bL27 of Legionella pneumophila (strain Paris).